We begin with the raw amino-acid sequence, 124 residues long: Large ribosomal subunit protein bL12 (124 aa).

The protein belongs to the bacterial ribosomal protein bL12 family. As to quaternary structure, homodimer. Part of the ribosomal stalk of the 50S ribosomal subunit. Forms a multimeric L10(L12)X complex, where L10 forms an elongated spine to which 2 to 4 L12 dimers bind in a sequential fashion. Binds GTP-bound translation factors.

Functionally, forms part of the ribosomal stalk which helps the ribosome interact with GTP-bound translation factors. Is thus essential for accurate translation. The protein is Large ribosomal subunit protein bL12 of Brucella abortus (strain S19).